Consider the following 273-residue polypeptide: Putative phosphoenolpyruvate synthase regulatory protein (273 aa).

An ADP-binding site is contributed by 154–161; it reads GVSRSGKT.

It belongs to the pyruvate, phosphate/water dikinase regulatory protein family. PSRP subfamily.

It catalyses the reaction [pyruvate, water dikinase] + ADP = [pyruvate, water dikinase]-phosphate + AMP + H(+). The catalysed reaction is [pyruvate, water dikinase]-phosphate + phosphate + H(+) = [pyruvate, water dikinase] + diphosphate. Bifunctional serine/threonine kinase and phosphorylase involved in the regulation of the phosphoenolpyruvate synthase (PEPS) by catalyzing its phosphorylation/dephosphorylation. In Neisseria gonorrhoeae (strain ATCC 700825 / FA 1090), this protein is Putative phosphoenolpyruvate synthase regulatory protein.